The following is a 461-amino-acid chain: Trigger factor (461 aa).

The PPIase FKBP-type domain occupies glycine 169–proline 256. Positions proline 432–serine 461 are disordered.

This sequence belongs to the FKBP-type PPIase family. Tig subfamily.

The protein resides in the cytoplasm. The enzyme catalyses [protein]-peptidylproline (omega=180) = [protein]-peptidylproline (omega=0). In terms of biological role, involved in protein export. Acts as a chaperone by maintaining the newly synthesized protein in an open conformation. Functions as a peptidyl-prolyl cis-trans isomerase. The chain is Trigger factor from Gloeobacter violaceus (strain ATCC 29082 / PCC 7421).